Consider the following 163-residue polypeptide: Epithelial membrane protein 3 (163 aa).

Residues 4-24 (LLLVVSALHILILILLFVATL) form a helical membrane-spanning segment. N-linked (GlcNAc...) asparagine glycosylation is found at N49 and N56. The next 3 helical transmembrane spans lie at 66 to 86 (VQVL…LFMF), 100 to 120 (TGFC…IYAI), and 139 to 159 (FALA…YIHL).

The protein belongs to the PMP-22/EMP/MP20 family.

The protein resides in the membrane. Functionally, probably involved in cell proliferation and cell-cell interactions. The sequence is that of Epithelial membrane protein 3 (EMP3) from Bos taurus (Bovine).